The chain runs to 61 residues: uncharacterized protein (61 aa).

2 helical membrane-spanning segments follow: residues 7 to 24 (FNVFCIVALGSIYGYKLF) and 29 to 48 (VSTTRLIIASVIVLWNIVGL).

The protein localises to the cell membrane. This is an uncharacterized protein from Bacillus subtilis (strain 168).